The sequence spans 131 residues: Small ribosomal subunit protein uS11 (131 aa).

This sequence belongs to the universal ribosomal protein uS11 family. In terms of assembly, part of the 30S ribosomal subunit. Interacts with proteins S7 and S18. Binds to IF-3.

In terms of biological role, located on the platform of the 30S subunit, it bridges several disparate RNA helices of the 16S rRNA. Forms part of the Shine-Dalgarno cleft in the 70S ribosome. This chain is Small ribosomal subunit protein uS11, found in Granulibacter bethesdensis (strain ATCC BAA-1260 / CGDNIH1).